Reading from the N-terminus, the 77-residue chain is Putative antitoxin MazE7 (77 aa).

The segment at 49–77 (REASHAETTTQAVRDEDREWEGTVGDGLG) is disordered.

Forms a complex with cognate toxin MazF7.

Its function is as follows. Antitoxin component of a type II toxin-antitoxin (TA) system. The protein is Putative antitoxin MazE7 (mazE7) of Mycobacterium tuberculosis (strain CDC 1551 / Oshkosh).